The chain runs to 570 residues: Probable D-xylulose kinase A (570 aa).

The substrate site is built by histidine 98, aspartate 279, and asparagine 280. ATP-binding positions include tryptophan 363, 470-471 (GG), and asparagine 474.

Belongs to the FGGY kinase family.

It localises to the cytoplasm. It carries out the reaction D-xylulose + ATP = D-xylulose 5-phosphate + ADP + H(+). Highly specific D-xylulose kinase which participates in the catabolism of xylose. Xylose is a major component of hemicelluloses such as xylan. Most fungi utilize D-xylose via three enzymatic reactions, xylose reductase (XR), xylitol dehydrogenase (XDH), and xylulokinase, to form xylulose 5-phosphate, which enters pentose phosphate pathway. The sequence is that of Probable D-xylulose kinase A (xkiA) from Arthroderma otae (strain ATCC MYA-4605 / CBS 113480) (Microsporum canis).